The chain runs to 233 residues: Protein Mis18-alpha (233 aa).

Phosphoserine occurs at positions 36, 39, and 40. The Mis18 domain maps to 80–178 (PLVFLCSGCR…NVEAVESYVL (99 aa)). The Zn(2+) site is built by Cys85, Cys88, Cys141, and Cys144. A Glycyl lysine isopeptide (Lys-Gly) (interchain with G-Cter in SUMO2) cross-link involves residue Lys162. Ser233 carries the phosphoserine modification.

Belongs to the mis18 family. In terms of assembly, homodimer, and heterodimer with OIP5/MIS18B. Identified in a complex containing MIS18A, OIP5/MIS18B, MIS18BP1, RBBP7 and RBBP4.

The protein localises to the nucleus. It is found in the chromosome. Its subcellular location is the centromere. In terms of biological role, required for recruitment of CENPA to centromeres and normal chromosome segregation during mitosis. The sequence is that of Protein Mis18-alpha (MIS18A) from Plecturocebus moloch (Dusky titi monkey).